We begin with the raw amino-acid sequence, 1026 residues long: Isoleucine--tRNA ligase (1026 aa).

The 'HIGH' region signature appears at 51 to 61 (PTANGRPHIGH). The short motif at 591 to 595 (KMSKS) is the 'KMSKS' region element. Lys594 contributes to the ATP binding site.

This sequence belongs to the class-I aminoacyl-tRNA synthetase family. IleS type 2 subfamily. In terms of assembly, monomer. Zn(2+) is required as a cofactor.

Its subcellular location is the cytoplasm. The enzyme catalyses tRNA(Ile) + L-isoleucine + ATP = L-isoleucyl-tRNA(Ile) + AMP + diphosphate. Its function is as follows. Catalyzes the attachment of isoleucine to tRNA(Ile). As IleRS can inadvertently accommodate and process structurally similar amino acids such as valine, to avoid such errors it has two additional distinct tRNA(Ile)-dependent editing activities. One activity is designated as 'pretransfer' editing and involves the hydrolysis of activated Val-AMP. The other activity is designated 'posttransfer' editing and involves deacylation of mischarged Val-tRNA(Ile). The chain is Isoleucine--tRNA ligase from Thermoplasma acidophilum (strain ATCC 25905 / DSM 1728 / JCM 9062 / NBRC 15155 / AMRC-C165).